A 396-amino-acid polypeptide reads, in one-letter code: S-adenosylmethionine synthase (396 aa).

His14 is a binding site for ATP. Asp16 serves as a coordination point for Mg(2+). Glu42 provides a ligand contact to K(+). Residues Glu55 and Gln98 each contribute to the L-methionine site. The flexible loop stretch occupies residues 98 to 108 (QSPDIALGVNK). ATP contacts are provided by residues 174 to 176 (DGK), 241 to 242 (RF), Asp250, 256 to 257 (RK), Ala273, and Lys277. Asp250 lines the L-methionine pocket. L-methionine is bound at residue Lys281.

This sequence belongs to the AdoMet synthase family. Homotetramer; dimer of dimers. The cofactor is Mg(2+). It depends on K(+) as a cofactor.

It localises to the cytoplasm. It catalyses the reaction L-methionine + ATP + H2O = S-adenosyl-L-methionine + phosphate + diphosphate. It functions in the pathway amino-acid biosynthesis; S-adenosyl-L-methionine biosynthesis; S-adenosyl-L-methionine from L-methionine: step 1/1. Functionally, catalyzes the formation of S-adenosylmethionine (AdoMet) from methionine and ATP. The overall synthetic reaction is composed of two sequential steps, AdoMet formation and the subsequent tripolyphosphate hydrolysis which occurs prior to release of AdoMet from the enzyme. The sequence is that of S-adenosylmethionine synthase from Pseudothermotoga lettingae (strain ATCC BAA-301 / DSM 14385 / NBRC 107922 / TMO) (Thermotoga lettingae).